The sequence spans 743 residues: Type VI secretion system spike protein VgrG1 (743 aa).

This sequence belongs to the VgrG protein family.

The protein resides in the secreted. It catalyses the reaction L-arginyl-[protein] + NAD(+) = N(omega)-(ADP-D-ribosyl)-L-arginyl-[protein] + nicotinamide + H(+). In terms of biological role, part of the type VI secretion system specialized secretion system, which delivers several virulence factors in both prokaryotic and eukaryotic cells during infection. Acts directly as an secreted effector with an actin ADP-ribosyltransferase activity that disrupts the host actin cytoskeleton, leading to a decrease in host cell viability and an increase in apoptosis. The sequence is that of Type VI secretion system spike protein VgrG1 (vgrG1) from Aeromonas hydrophila subsp. hydrophila (strain ATCC 7966 / DSM 30187 / BCRC 13018 / CCUG 14551 / JCM 1027 / KCTC 2358 / NCIMB 9240 / NCTC 8049).